Consider the following 185-residue polypeptide: Ribosome-recycling factor (185 aa).

Belongs to the RRF family.

Its subcellular location is the cytoplasm. Functionally, responsible for the release of ribosomes from messenger RNA at the termination of protein biosynthesis. May increase the efficiency of translation by recycling ribosomes from one round of translation to another. This Erwinia tasmaniensis (strain DSM 17950 / CFBP 7177 / CIP 109463 / NCPPB 4357 / Et1/99) protein is Ribosome-recycling factor.